The chain runs to 159 residues: Large ribosomal subunit protein uL15 (159 aa).

The interval 1–39 (MKLNELSPADGSTKKRMRVGRGVGSGKGKTAGRGVKGQN) is disordered. Gly residues predominate over residues 21–35 (RGVGSGKGKTAGRGV).

The protein belongs to the universal ribosomal protein uL15 family. As to quaternary structure, part of the 50S ribosomal subunit.

Binds to the 23S rRNA. This is Large ribosomal subunit protein uL15 from Hyphomonas neptunium (strain ATCC 15444).